The following is a 213-amino-acid chain: Adenylate kinase (213 aa).

10–15 lines the ATP pocket; sequence GSGKGT. An NMP region spans residues 30–59; that stretch reads STGDMLRTTVNKESVLGKNIQAIIKLGNLV. Residues Thr31, Arg36, 57 to 59, 85 to 88, and Gln92 each bind AMP; these read NLV and GFPR. The interval 122 to 159 is LID; that stretch reads GRMVHEPSGRIYHVTFNPPKQKGKDDITGENLIIRQDD. Residues Arg123 and 132 to 133 each bind ATP; that span reads IY. AMP-binding residues include Arg156 and Arg167. Residue Cys199 participates in ATP binding.

This sequence belongs to the adenylate kinase family. Monomer.

Its subcellular location is the cytoplasm. It catalyses the reaction AMP + ATP = 2 ADP. It participates in purine metabolism; AMP biosynthesis via salvage pathway; AMP from ADP: step 1/1. Catalyzes the reversible transfer of the terminal phosphate group between ATP and AMP. Plays an important role in cellular energy homeostasis and in adenine nucleotide metabolism. The sequence is that of Adenylate kinase from Baumannia cicadellinicola subsp. Homalodisca coagulata.